The following is a 323-amino-acid chain: tRNA U34 carboxymethyltransferase (323 aa).

Residues Lys-91, Trp-105, Lys-110, Gly-130, 152 to 154, 181 to 182, Met-196, Tyr-200, and Arg-315 contribute to the carboxy-S-adenosyl-L-methionine site; these read DPT and IE.

It belongs to the class I-like SAM-binding methyltransferase superfamily. CmoB family. As to quaternary structure, homotetramer.

The catalysed reaction is carboxy-S-adenosyl-L-methionine + 5-hydroxyuridine(34) in tRNA = 5-carboxymethoxyuridine(34) in tRNA + S-adenosyl-L-homocysteine + H(+). In terms of biological role, catalyzes carboxymethyl transfer from carboxy-S-adenosyl-L-methionine (Cx-SAM) to 5-hydroxyuridine (ho5U) to form 5-carboxymethoxyuridine (cmo5U) at position 34 in tRNAs. In Salmonella typhimurium (strain LT2 / SGSC1412 / ATCC 700720), this protein is tRNA U34 carboxymethyltransferase.